A 506-amino-acid chain; its full sequence is Histidine--tRNA ligase, mitochondrial (506 aa).

The transit peptide at 1–33 directs the protein to the mitochondrion; sequence MPQLGLLPGRAWTVLLGLLRPPPGALCIRAVRS. Phosphoserine is present on serine 67. L-histidine-binding positions include 131-133, arginine 158, glutamine 174, aspartate 178, arginine 327, and 331-332; these read DLT and YY. Position 444 is an N6-acetyllysine (lysine 444).

Belongs to the class-II aminoacyl-tRNA synthetase family. Homodimer.

The protein resides in the mitochondrion. The catalysed reaction is tRNA(His) + L-histidine + ATP = L-histidyl-tRNA(His) + AMP + diphosphate + H(+). Mitochondrial aminoacyl-tRNA synthetase that catalyzes the ATP-dependent ligation of histidine to the 3'-end of its cognate tRNA, via the formation of an aminoacyl-adenylate intermediate (His-AMP). This Bos taurus (Bovine) protein is Histidine--tRNA ligase, mitochondrial (HARS2).